The primary structure comprises 86 residues: Toxin TdNa7 (86 aa).

The N-terminal stretch at 1–20 (MTRFVLFLSCFFLIGMVVEC) is a signal peptide. The LCN-type CS-alpha/beta domain maps to 21–83 (KDGYLMGPDG…TWERATNTCG (63 aa)). 4 disulfides stabilise this stretch: cysteine 31–cysteine 82, cysteine 35–cysteine 57, cysteine 43–cysteine 63, and cysteine 47–cysteine 65. Lysine 84 is modified (lysine amide).

This sequence belongs to the long (4 C-C) scorpion toxin superfamily. Sodium channel inhibitor family. Beta subfamily. Expressed by the venom gland.

The protein resides in the secreted. Functionally, beta toxins bind voltage-independently at site-4 of sodium channels (Nav) and shift the voltage of activation toward more negative potentials thereby affecting sodium channel activation and promoting spontaneous and repetitive firing. This Tityus discrepans (Venezuelan scorpion) protein is Toxin TdNa7.